Consider the following 485-residue polypeptide: G2/mitotic-specific cyclin-A1 (485 aa).

Residues 1–24 are disordered; the sequence is MRSALSLKPSNGNAAKSQAVNNKN. Over residues 8-24 the composition is skewed to polar residues; that stretch reads KPSNGNAAKSQAVNNKN.

The protein belongs to the cyclin family. Cyclin AB subfamily. Expressed in the cell lineages ABarp, C and E as well as the NSM neuroblasts.

Functionally, involved in the control of the cell cycle after S phase. May bind to and activate cdk-1 and/or cdk-2 to promote cell cycle progression. Necessary for embryogenesis. The protein is G2/mitotic-specific cyclin-A1 (cya-1) of Caenorhabditis elegans.